Consider the following 503-residue polypeptide: Maturase K (503 aa).

Belongs to the intron maturase 2 family. MatK subfamily.

The protein resides in the plastid. It localises to the chloroplast. Usually encoded in the trnK tRNA gene intron. Probably assists in splicing its own and other chloroplast group II introns. The protein is Maturase K of Purshia tridentata (Antelope bitterbrush).